The chain runs to 119 residues: ATP-dependent Clp protease adapter protein ClpS (119 aa).

The interval 1–24 (MGPESPDSIPPHGPGNGDGDQDLD) is disordered.

Belongs to the ClpS family. Binds to the N-terminal domain of the chaperone ClpA.

Involved in the modulation of the specificity of the ClpAP-mediated ATP-dependent protein degradation. This chain is ATP-dependent Clp protease adapter protein ClpS, found in Gluconobacter oxydans (strain 621H) (Gluconobacter suboxydans).